A 156-amino-acid polypeptide reads, in one-letter code: Small ribosomal subunit protein uS7 (156 aa).

Belongs to the universal ribosomal protein uS7 family. In terms of assembly, part of the 30S ribosomal subunit. Contacts proteins S9 and S11.

One of the primary rRNA binding proteins, it binds directly to 16S rRNA where it nucleates assembly of the head domain of the 30S subunit. Is located at the subunit interface close to the decoding center, probably blocks exit of the E-site tRNA. In Azoarcus sp. (strain BH72), this protein is Small ribosomal subunit protein uS7.